The primary structure comprises 564 residues: Mercuric reductase (564 aa).

The HMA domain occupies 1-65 (MSTLKITGMT…AVAGLGYRAT (65 aa)). Cys-11 and Cys-14 together coordinate a metal cation. FAD-binding residues include Ala-109, Gly-129, and Thr-134. Cys-135 and Cys-140 are oxidised to a cystine. 4 residues coordinate FAD: Lys-144, Ala-210, Asp-406, and Val-414. Positions 561 and 562 each coordinate Hg(2+).

It belongs to the class-I pyridine nucleotide-disulfide oxidoreductase family. In terms of assembly, homodimer. It depends on FAD as a cofactor.

It catalyses the reaction Hg + NADP(+) + H(+) = Hg(2+) + NADPH. Functionally, resistance to Hg(2+) in bacteria appears to be governed by a specialized system which includes mercuric reductase. MerA protein is responsible for volatilizing mercury as Hg(0). This chain is Mercuric reductase (merA), found in Shigella flexneri.